The primary structure comprises 525 residues: ATP synthase subunit alpha (525 aa).

An ATP-binding site is contributed by 172 to 179 (GDRQTGKT).

It belongs to the ATPase alpha/beta chains family. In terms of assembly, F-type ATPases have 2 components, CF(1) - the catalytic core - and CF(0) - the membrane proton channel. CF(1) has five subunits: alpha(3), beta(3), gamma(1), delta(1), epsilon(1). CF(0) has three main subunits: a(1), b(2) and c(9-12). The alpha and beta chains form an alternating ring which encloses part of the gamma chain. CF(1) is attached to CF(0) by a central stalk formed by the gamma and epsilon chains, while a peripheral stalk is formed by the delta and b chains.

It localises to the cell inner membrane. The enzyme catalyses ATP + H2O + 4 H(+)(in) = ADP + phosphate + 5 H(+)(out). Produces ATP from ADP in the presence of a proton gradient across the membrane. The alpha chain is a regulatory subunit. The polypeptide is ATP synthase subunit alpha (Parabacteroides distasonis (strain ATCC 8503 / DSM 20701 / CIP 104284 / JCM 5825 / NCTC 11152)).